The sequence spans 832 residues: Elongation factor 2 (832 aa).

The tr-type G domain occupies 17-336; that stretch reads HNIRNMSVIA…MIVTHLPSPA (320 aa). 26-33 provides a ligand contact to GTP; that stretch reads AHVDHGKS. Phosphothreonine occurs at positions 57 and 59. Residues 152-155 and 207-209 contribute to the GTP site; these read NKVD and SGL. The segment at 580 to 608 is disordered; sequence AEPLPDGLTDDIEEGKVSPRDDPKERSNL. Over residues 593–608 the composition is skewed to basic and acidic residues; the sequence is EGKVSPRDDPKERSNL. The residue at position 689 (His-689) is a Diphthamide.

This sequence belongs to the TRAFAC class translation factor GTPase superfamily. Classic translation factor GTPase family. EF-G/EF-2 subfamily.

It is found in the cytoplasm. It catalyses the reaction GTP + H2O = GDP + phosphate + H(+). Catalyzes the GTP-dependent ribosomal translocation step during translation elongation. During this step, the ribosome changes from the pre-translocational (PRE) to the post-translocational (POST) state as the newly formed A-site-bound peptidyl-tRNA and P-site-bound deacylated tRNA move to the P and E sites, respectively. Catalyzes the coordinated movement of the two tRNA molecules, the mRNA and conformational changes in the ribosome. In Cryptosporidium parvum, this protein is Elongation factor 2.